Reading from the N-terminus, the 259-residue chain is MHIDVTGRGPDLVLIHGWALQGGVFAPLVQRLADQFTLHLVDLPGHGHSREDTTPLRLPFVVGAIAAATPPAVWCGWSLGGLFALHAAATLPKVRGLAMIAATPRFVRGEDWPHAVEPAVFEQFGRELATDFGGTLERFLALDVMGSAHAREELRTLRQRLVERGAPTERALLEGLRLLESTDLRGALPTLGKPSLWIAGQRDRLVSPVAMQAAAALAPGAQALTIAHGGHAPFLGHADEVAAALQHFVAALSPADGGQ.

Residues W18, 78-79 (SL), and 139-143 (FLALD) each bind substrate. S78 acts as the Nucleophile in catalysis. Active-site residues include D203 and H231. H231 contacts substrate.

This sequence belongs to the AB hydrolase superfamily. Carboxylesterase BioH family. In terms of assembly, monomer.

It localises to the cytoplasm. It catalyses the reaction 6-carboxyhexanoyl-[ACP] methyl ester + H2O = 6-carboxyhexanoyl-[ACP] + methanol + H(+). It functions in the pathway cofactor biosynthesis; biotin biosynthesis. Its function is as follows. The physiological role of BioH is to remove the methyl group introduced by BioC when the pimeloyl moiety is complete. It allows to synthesize pimeloyl-ACP via the fatty acid synthetic pathway through the hydrolysis of the ester bonds of pimeloyl-ACP esters. This chain is Pimeloyl-[acyl-carrier protein] methyl ester esterase, found in Stenotrophomonas maltophilia (strain K279a).